The following is a 164-amino-acid chain: Protein eva-1 homolog B (164 aa).

A helical transmembrane segment spans residues 29–49 (GLYFVLGVCFGLLLTLCLLVI). Positions 56 to 110 (RSRPRTPAPRRDPRSSTLEPEDEDDEEDEDTMTRLGPDDTLQGQELSTEPDGPLS) are disordered. Positions 74–85 (EPEDEDDEEDED) are enriched in acidic residues. Phosphothreonine is present on residues threonine 86, threonine 149, and threonine 157.

It belongs to the EVA1 family.

It localises to the membrane. In Mus musculus (Mouse), this protein is Protein eva-1 homolog B (Eva1b).